The chain runs to 474 residues: MKIIHTAIEFAPVIKAGGLGDALYGLAKALAANHTTEVVIPLYPKLFTLPKEQDLCSIQKLSYFFAGEQEATAFSYFYEGIKVTLFKLDTQPELFENAETIYTSDDAFRFCAFSAAAASYIQKEGANIVHLHDWHTGLVAGLLKQQPCSQLQKIVLTLHNFGYRGYTTREILEASSLNEFYISQYQLFRDPQTCVLLKGALYCSDFVTTVSPTYAKEILEDYSDYEIHDAITARQHHLRGILNGIDTTIWGPETDPNLAKNYTKELFETPSIFFEAKAENKKALYERLGLSLEHSPCVCIISRIAEQKGPHFMKQAILHALENAYTLIIIGTCYGNQLHEEFANLQESLANSPDVRILLTYSDVLARQIFAAADMICIPSMFEPCGLTQMIGMRYGTVPLVRATGGLADTVANGINGFSFFNPHDFYEFRNMLSEAVTTYRTNHDKWQHIVRACLDFSSDLETAANKYLEIYKQ.

Lysine 15 lines the ADP-alpha-D-glucose pocket.

It belongs to the glycosyltransferase 1 family. Bacterial/plant glycogen synthase subfamily.

The enzyme catalyses [(1-&gt;4)-alpha-D-glucosyl](n) + ADP-alpha-D-glucose = [(1-&gt;4)-alpha-D-glucosyl](n+1) + ADP + H(+). Its pathway is glycan biosynthesis; glycogen biosynthesis. Its function is as follows. Synthesizes alpha-1,4-glucan chains using ADP-glucose. This chain is Glycogen synthase, found in Chlamydia trachomatis serovar D (strain ATCC VR-885 / DSM 19411 / UW-3/Cx).